Here is a 376-residue protein sequence, read N- to C-terminus: MNSLQVLTKKVLIENKAFSNYHEDDSFILQQLGLWWENGPIGFCKQCKMVISGSMSCSDVDSYELDRALVKAVKENQTDLIKLFVLWNADINYGIMCAKTERTKVLCIQLGANPEFLDNKKLYNMFVNLVRQQKVLLAIDIYYDNILILDSFGSHDFHALINFIYNGYILNLDEKEKMTRNTLVLKFWYKLAIEFNLIKPIRFLSKKFPHLDDWRLKTAVYLGNVDEIHHAYFQENIRLEPNHMMSLACMYPQNKLGIYYCFALGANINTALETLIRFINHEVYREITFFSNYGIWSNIHFCISLGANPDTKKIQETLLREEKNVIMKLLFKKGFLGPHSILHKKILEPSEVRKIISTYEYTETFHSFSSLRDNLR.

Belongs to the asfivirus MGF 360 family.

Plays a role in virus cell tropism, and may be required for efficient virus replication in macrophages. The sequence is that of Protein MGF 360-7L from Ornithodoros (relapsing fever ticks).